The sequence spans 967 residues: Leucine--tRNA ligase (967 aa).

Residues 43–53 (PYLSGHLHVGH) carry the 'HIGH' region motif. Residues 650-654 (KMSKS) carry the 'KMSKS' region motif. ATP is bound at residue lysine 653.

This sequence belongs to the class-I aminoacyl-tRNA synthetase family.

It localises to the cytoplasm. It catalyses the reaction tRNA(Leu) + L-leucine + ATP = L-leucyl-tRNA(Leu) + AMP + diphosphate. The protein is Leucine--tRNA ligase of Pyrococcus abyssi (strain GE5 / Orsay).